Consider the following 70-residue polypeptide: Exodeoxyribonuclease 7 small subunit (70 aa).

It belongs to the XseB family. Heterooligomer composed of large and small subunits.

Its subcellular location is the cytoplasm. The catalysed reaction is Exonucleolytic cleavage in either 5'- to 3'- or 3'- to 5'-direction to yield nucleoside 5'-phosphates.. In terms of biological role, bidirectionally degrades single-stranded DNA into large acid-insoluble oligonucleotides, which are then degraded further into small acid-soluble oligonucleotides. This Streptococcus gordonii (strain Challis / ATCC 35105 / BCRC 15272 / CH1 / DL1 / V288) protein is Exodeoxyribonuclease 7 small subunit.